A 270-amino-acid polypeptide reads, in one-letter code: Small ribosomal subunit protein uS3 (270 aa).

The KH type-2 domain occupies 38 to 106 (IRQMLTRGME…QVQLNILEVK (69 aa)). The tract at residues 212-270 (EREAAQAAQRAAGPQRRERPGRRRRGGGGGGGQQQQQAEKATAQATEAAKAAKSGNEGS) is disordered. Composition is skewed to low complexity over residues 216-225 (AQAAQRAAGP) and 245-263 (QQQQAEKATAQATEAAKAA).

This sequence belongs to the universal ribosomal protein uS3 family. Part of the 30S ribosomal subunit. Forms a tight complex with proteins S10 and S14.

Its function is as follows. Binds the lower part of the 30S subunit head. Binds mRNA in the 70S ribosome, positioning it for translation. In Thermobifida fusca (strain YX), this protein is Small ribosomal subunit protein uS3.